The following is a 556-amino-acid chain: Formate--tetrahydrofolate ligase 2 (556 aa).

65-72 lines the ATP pocket; sequence TPAGEGKS.

It belongs to the formate--tetrahydrofolate ligase family.

It catalyses the reaction (6S)-5,6,7,8-tetrahydrofolate + formate + ATP = (6R)-10-formyltetrahydrofolate + ADP + phosphate. The protein operates within one-carbon metabolism; tetrahydrofolate interconversion. In Streptococcus sanguinis (strain SK36), this protein is Formate--tetrahydrofolate ligase 2.